The sequence spans 156 residues: Small ribosomal subunit protein uS7 (156 aa).

The protein belongs to the universal ribosomal protein uS7 family. In terms of assembly, part of the 30S ribosomal subunit. Contacts proteins S9 and S11.

Functionally, one of the primary rRNA binding proteins, it binds directly to 16S rRNA where it nucleates assembly of the head domain of the 30S subunit. Is located at the subunit interface close to the decoding center, probably blocks exit of the E-site tRNA. In Dehalococcoides mccartyi (strain ATCC BAA-2266 / KCTC 15142 / 195) (Dehalococcoides ethenogenes (strain 195)), this protein is Small ribosomal subunit protein uS7.